We begin with the raw amino-acid sequence, 189 residues long: Putative 3-methyladenine DNA glycosylase (189 aa).

Belongs to the DNA glycosylase MPG family.

This chain is Putative 3-methyladenine DNA glycosylase (mag), found in Corynebacterium glutamicum (strain ATCC 13032 / DSM 20300 / JCM 1318 / BCRC 11384 / CCUG 27702 / LMG 3730 / NBRC 12168 / NCIMB 10025 / NRRL B-2784 / 534).